Reading from the N-terminus, the 54-residue chain is Rubredoxin-1 (54 aa).

Positions 1 to 52 constitute a Rubredoxin-like domain; the sequence is MKKWECVVCGFIYDEAEGLPDEGIEPGTAWNNVPEDWVCPDCGVGKDDFEMV. The Fe cation site is built by cysteine 6, cysteine 9, cysteine 39, and cysteine 42.

This sequence belongs to the rubredoxin family. It depends on Fe(3+) as a cofactor.

The protein resides in the cytoplasm. The protein operates within hydrocarbon metabolism; alkane degradation. Involved in the hydrocarbon hydroxylating system, which transfers electrons from NADH to rubredoxin reductase and then through rubredoxin to alkane 1 monooxygenase. The chain is Rubredoxin-1 (rubA) from Alcanivorax borkumensis (strain ATCC 700651 / DSM 11573 / NCIMB 13689 / SK2).